The primary structure comprises 91 residues: Cell division topological specificity factor (91 aa).

This sequence belongs to the MinE family.

Its function is as follows. Prevents the cell division inhibition by proteins MinC and MinD at internal division sites while permitting inhibition at polar sites. This ensures cell division at the proper site by restricting the formation of a division septum at the midpoint of the long axis of the cell. The chain is Cell division topological specificity factor from Wigglesworthia glossinidia brevipalpis.